The chain runs to 156 residues: Cytochrome c-type biogenesis protein CcmE 1 (156 aa).

The Cytoplasmic portion of the chain corresponds to 1-8 (MNATRRQR). The chain crosses the membrane as a helical; Signal-anchor for type II membrane protein span at residues 9-29 (LWWVICVLTAAALAVTLIVFA). Residues 30–156 (LQRNMSYLFT…ATATPLTAPR (127 aa)) are Periplasmic-facing. The heme site is built by histidine 123 and tyrosine 127. A disordered region spans residues 137–156 (AEGHAGKPIPATATPLTAPR). A compositionally biased stretch (low complexity) spans 146–156 (PATATPLTAPR).

The protein belongs to the CcmE/CycJ family.

Its subcellular location is the cell inner membrane. Heme chaperone required for the biogenesis of c-type cytochromes. Transiently binds heme delivered by CcmC and transfers the heme to apo-cytochromes in a process facilitated by CcmF and CcmH. The protein is Cytochrome c-type biogenesis protein CcmE 1 of Xanthomonas euvesicatoria pv. vesicatoria (strain 85-10) (Xanthomonas campestris pv. vesicatoria).